Here is a 145-residue protein sequence, read N- to C-terminus: Androgenic gland hormone (145 aa).

An N-terminal signal peptide occupies residues 1–21; it reads MKGLLFIVSLLCLTLHQRVWA. Disulfide bonds link Cys33–Cys122, Cys42–Cys59, Cys44–Cys140, and Cys123–Cys131. Positions 68–112 are cleaved as a propeptide — c peptide; that stretch reads SADDEDYLFEEDEDDEFFHPRALSPPAAKSGDERLEDEVSFHSRS. Asn132 carries an N-linked (GlcNAc...) asparagine glycan.

As to expression, androgenic gland.

The protein resides in the secreted. Functionally, controls sex differentiation and the formation of male appendages, spermatogenesis, pigmentation, and male specific behavior. This chain is Androgenic gland hormone (AGH), found in Porcellio scaber (Common rough woodlouse).